Here is a 113-residue protein sequence, read N- to C-terminus: Hydrogenase maturation factor HypA (113 aa).

H2 contributes to the Ni(2+) binding site. 4 residues coordinate Zn(2+): C73, C76, C89, and C92.

Belongs to the HypA/HybF family.

Involved in the maturation of [NiFe] hydrogenases. Required for nickel insertion into the metal center of the hydrogenase. In Cereibacter sphaeroides (strain KD131 / KCTC 12085) (Rhodobacter sphaeroides), this protein is Hydrogenase maturation factor HypA.